We begin with the raw amino-acid sequence, 449 residues long: Dynein regulatory complex protein 10 (449 aa).

Residues 90–125 adopt a coiled-coil conformation; the sequence is AVREHEDLCQVLLENVRCLKEKERQLQEQKEAEEEG. The region spanning 400–429 is the IQ domain; it reads MVRAATLIQALWKGYLVRSLLRSKKKRGKG. Residues 422–449 form a disordered region; it reads SKKKRGKGKAKDKEKGKQKGKEKGKGKK. Over residues 430 to 449 the composition is skewed to basic and acidic residues; the sequence is KAKDKEKGKQKGKEKGKGKK.

The protein belongs to the DRC10 family. In terms of assembly, component of the nexin-dynein regulatory complex (N-DRC). Interacts with CFAP52.

Its subcellular location is the cytoplasm. It localises to the cytoskeleton. The protein resides in the flagellum axoneme. Functionally, component of the nexin-dynein regulatory complex (N-DRC), a key regulator of ciliary/flagellar motility which maintains the alignment and integrity of the distal axoneme and regulates microtubule sliding in motile axonemes. The polypeptide is Dynein regulatory complex protein 10 (IQCD) (Homo sapiens (Human)).